A 153-amino-acid polypeptide reads, in one-letter code: Heavy metal-associated isoprenylated plant protein 25 (153 aa).

An HMA domain is found at 24–88; sequence LQTVDVRVLI…IIHRTGKRAE (65 aa). Cys-35 and Cys-38 together coordinate a metal cation. Position 150 is a cysteine methyl ester (Cys-150). Cys-150 is lipidated: S-farnesyl cysteine. A propeptide spans 151-153 (removed in mature form); sequence VVM.

It belongs to the HIPP family. As to expression, expressed in roots, shoot apical meristem, trichomes and flower buds.

Its subcellular location is the membrane. Functionally, heavy-metal-binding protein. Binds cadmium. May be involved in cadmium transport and play a role in cadmium detoxification. This is Heavy metal-associated isoprenylated plant protein 25 from Arabidopsis thaliana (Mouse-ear cress).